The sequence spans 357 residues: S-adenosylmethionine:tRNA ribosyltransferase-isomerase (357 aa).

It belongs to the QueA family. Monomer.

It localises to the cytoplasm. It catalyses the reaction 7-aminomethyl-7-carbaguanosine(34) in tRNA + S-adenosyl-L-methionine = epoxyqueuosine(34) in tRNA + adenine + L-methionine + 2 H(+). Its pathway is tRNA modification; tRNA-queuosine biosynthesis. Transfers and isomerizes the ribose moiety from AdoMet to the 7-aminomethyl group of 7-deazaguanine (preQ1-tRNA) to give epoxyqueuosine (oQ-tRNA). The sequence is that of S-adenosylmethionine:tRNA ribosyltransferase-isomerase from Phenylobacterium zucineum (strain HLK1).